We begin with the raw amino-acid sequence, 503 residues long: CDK5 regulatory subunit-associated protein 3 (503 aa).

3 consecutive short sequence motifs (shuffled ATG8-binding motif) follow at residues 266 to 269 (IDWG), 288 to 291 (IDWG), and 306 to 309 (IDWG). The interval 268–503 (WGDFGVEAVS…RPVNLMGTSL (236 aa)) is required for interaction with UFL1 and mediates interaction with CHEK1. The RPL10a-binding domain (RBD) stretch occupies residues 352–367 (DELMELEIFLSQRAVE). A Glycyl lysine isopeptide (Lys-Gly) (interchain with G-Cter in SUMO2) cross-link involves residue Lys-447.

It belongs to the CDK5RAP3 family. As to quaternary structure, substrate adapter component of the UFM1 ribosome E3 ligase (UREL) complex, composed of UFL1, DDRGK1 and CDK5RAP3. Interaction with UFL1 anchors CDK5RAP3 in the cytoplasm, preventing its translocation to the nucleus which allows expression of the CCND1 cyclin and progression of cells through the G1/S transition. Interacts with ATG8 family proteins MAP1LC3A, MAP1LC3B, GABARAP, GABARAPL1 and GABARAPL2. Interacts with CDK5R1; competes with CDK5RAP1 and CDK5RAP2. Interacts with RELA. Interacts with CHEK1; may negatively regulate CHEK1 and thereby stimulate entry into mitosis. Interacts with CDKN2A/ARF and MDM2; forms a ternary complex involved in regulation of p53/TP53. Interacts with MAPK14. Interacts with CCNB1. Interacts with TUBG1; may regulate CDK5RAP3 in mitotic G2/M transition checkpoint. Post-translationally, may be phosphorylated by CDK5. Ubiquitinated. Probably triggers proteasomal degradation and is negatively regulated by UFL1. In terms of processing, may be ufmylated. Post-translationally, cleaved by caspases early during apoptosis, the resulting peptides may play a role in rupture of the nuclear envelope. In terms of tissue distribution, widely expressed with higher expression in secretory tissues.

Its subcellular location is the endoplasmic reticulum membrane. The protein resides in the cytoplasm. It localises to the nucleus. It is found in the cytoskeleton. The protein localises to the microtubule organizing center. Its subcellular location is the centrosome. Functionally, substrate adapter of E3 ligase complexes mediating ufmylation, the covalent attachment of the ubiquitin-like modifier UFM1 to substrate proteins, and which is involved in various processes, such as ribosome recycling and reticulophagy (also called ER-phagy). As part of the UREL complex, plays a key role in ribosome recycling by promoting mono-ufmylation of RPL26/uL24 subunit of the 60S ribosome. Ufmylation of RPL26/uL24 occurs on free 60S ribosomes following ribosome dissociation: it weakens the junction between post-termination 60S subunits and SEC61 translocons, promoting release and recycling of the large ribosomal subunit from the endoplasmic reticulum membrane. Ufmylation of RPL26/uL24 and subsequent 60S ribosome recycling either take place after normal termination of translation or after ribosome stalling during cotranslational translocation at the endoplasmic reticulum. Within the UREL complex, CDK5RAP3 acts as a substrate adapter that constrains UFL1 ligase activity to mono-ufmylate RPL26/uL24 at 'Lys-134'. The UREL complex is also involved in reticulophagy in response to endoplasmic reticulum stress by promoting ufmylation of proteins such as CYB5R3, thereby promoting lysosomal degradation of ufmylated proteins. Also acts as a regulator of transcription: negatively regulates NF-kappa-B-mediated gene transcription through the control of RELA phosphorylation. Also regulates mitotic G2/M transition checkpoint and mitotic G2 DNA damage checkpoint. Through its interaction with CDKN2A/ARF and MDM2 may induce MDM2-dependent p53/TP53 ubiquitination, stabilization and activation in the nucleus, thereby promoting G1 cell cycle arrest and inhibition of cell proliferation. May also play a role in the rupture of the nuclear envelope during apoptosis. May regulate MAPK14 activity by regulating its dephosphorylation by PPM1D/WIP1. Required for liver development. The sequence is that of CDK5 regulatory subunit-associated protein 3 from Mus musculus (Mouse).